The primary structure comprises 360 residues: DNA replication and repair protein RecF (360 aa).

30 to 37 (GQNGSGKT) is an ATP binding site.

Belongs to the RecF family.

It is found in the cytoplasm. Its function is as follows. The RecF protein is involved in DNA metabolism; it is required for DNA replication and normal SOS inducibility. RecF binds preferentially to single-stranded, linear DNA. It also seems to bind ATP. The chain is DNA replication and repair protein RecF from Shewanella piezotolerans (strain WP3 / JCM 13877).